A 670-amino-acid chain; its full sequence is Oxidoreductase PigB (670 aa).

An N-terminal signal peptide occupies residues 1–19; sequence MIIQRLFGILYMLAGLAKA. The next 4 helical transmembrane spans lie at 53-73, 76-96, 98-118, and 238-258; these read GDVINILVGVVLFGSGVILML, LWTTLVIYAQLLMMAVFVVIL, QSQPQVMLLDGVFALAALYML, and LVFFDTFLLLKCLGEIVVGFI.

This sequence belongs to the flavin monoamine oxidase family. It depends on FAD as a cofactor.

It localises to the membrane. The protein operates within antibiotic biosynthesis; prodigiosin biosynthesis. Its function is as follows. Involved in the biosynthesis of 2-methyl-3-n-amyl-pyrrole (MAP), one of the terminal products involved in the biosynthesis of the red antibiotic prodigiosin (Pig). Catalyzes the oxidation of dihydro form of MAP (H2MAP) to yield MAP. In Serratia sp. (strain ATCC 39006) (Prodigiosinella confusarubida), this protein is Oxidoreductase PigB.